The primary structure comprises 512 residues: Cytochrome P450 monooxygenase adrA (512 aa).

A helical membrane pass occupies residues 12-32 (FEPVSLVGLVLLSGLFLLLTA). N-linked (GlcNAc...) asparagine glycosylation is found at asparagine 86, asparagine 149, and asparagine 210. Cysteine 453 contributes to the heme binding site.

The protein belongs to the cytochrome P450 family. Heme is required as a cofactor.

It localises to the membrane. It functions in the pathway secondary metabolite biosynthesis; terpenoid biosynthesis. Cytochrome P450 monooxygenase; part of the gene cluster that mediates the biosynthesis of andrastins, meroterpenoid compounds that exhibit inhibitory activity against ras farnesyltransferase, suggesting that they could be promising leads for antitumor agents. The first step of the pathway is the synthesis of 3,5-dimethylorsellinic acid (DMOA) by the polyketide synthase adrD via condensation of one acetyl-CoA starter unit with 3 malonyl-CoA units and 2 methylations. DMAO is then converted to farnesyl-DMAO by the prenyltransferase adrG. The methyltransferase adrK catalyzes the methylation of the carboxyl group of farnesyl-DMAO to farnesyl-DMAO methyl ester which is further converted to epoxyfarnesyl-DMAO methyl ester by the FAD-dependent monooxygenase adrH. The terpene cyclase adrI then catalyzes the carbon skeletal rearrangement to generate the andrastin E, the first compound in the pathway having the andrastin scaffold, with the tetracyclic ring system. The post-cyclization tailoring enzymes adrF, adrE, adrJ, and adrA, are involved in the conversion of andrastin E into andrastin A. The short chain dehydrogenase adrF is responsible for the oxidation of the C-3 a hydroxyl group of andrastin E to yield the corresponding ketone, andrastin D. The ketoreductase adrE stereoselectively reduces the carbonyl moiety to reverse the stereochemistry of the C-3 position to yield andrastin F. The acetyltransferase adrJ is the acetyltransferase that attaches the acetyl group to the C-3 hydroxyl group of andrastin F to yield andrastin C. Finally, the cytochrome P450 monooxygenase adrA catalyzes two sequential oxidation reactions of the C-23 methyl group, to generate the corresponding alcohol andrastin B, and aldehyde andrastin A. The sequence is that of Cytochrome P450 monooxygenase adrA from Penicillium rubens (strain ATCC 28089 / DSM 1075 / NRRL 1951 / Wisconsin 54-1255) (Penicillium chrysogenum).